A 256-amino-acid polypeptide reads, in one-letter code: Protein US2 homolog (256 aa).

Disordered regions lie at residues Thr-100 to Pro-120, Ser-167 to Pro-186, and Val-236 to Ser-256. Over residues Ser-167–Arg-180 the composition is skewed to low complexity. Residues Asn-245–Ser-256 are compositionally biased toward basic and acidic residues.

This sequence belongs to the herpesviridae US2 family.

The chain is Protein US2 homolog (28K) from Sus scrofa (Pig).